The following is a 212-amino-acid chain: Methylthioribulose-1-phosphate dehydratase (212 aa).

The Zn(2+) site is built by His97 and His99.

The protein belongs to the aldolase class II family. MtnB subfamily. In terms of assembly, homotetramer. Requires Zn(2+) as cofactor.

It carries out the reaction 5-(methylsulfanyl)-D-ribulose 1-phosphate = 5-methylsulfanyl-2,3-dioxopentyl phosphate + H2O. It participates in amino-acid biosynthesis; L-methionine biosynthesis via salvage pathway; L-methionine from S-methyl-5-thio-alpha-D-ribose 1-phosphate: step 2/6. Its function is as follows. Catalyzes the dehydration of methylthioribulose-1-phosphate (MTRu-1-P) into 2,3-diketo-5-methylthiopentyl-1-phosphate (DK-MTP-1-P). The sequence is that of Methylthioribulose-1-phosphate dehydratase from Bacillus cereus (strain ATCC 10987 / NRS 248).